The sequence spans 113 residues: Con-Ins G3 (113 aa).

A signal peptide spans 1–21 (MTTSFYFLLVALGLLLYVCQS). Positions 22–29 (SFGNQHTR) are excised as a propeptide. Pro-34 carries the post-translational modification 4-hydroxyproline; partial. Disulfide bonds link Cys-38/Cys-99, Cys-50/Cys-112, and Cys-98/Cys-103. Position 41 is a 4-carboxyglutamate (Glu-41). His-51 carries the histidine amide modification. Positions 52-92 (GKRNDAGKKRGRASPLWQRQGFLSMLKAKRNEAFFLQRDGR) are cleaved as a propeptide — c peptide. Glu-96 bears the 4-carboxyglutamate mark. Pro-102 is modified (4-hydroxyproline; partial).

Belongs to the insulin family. In terms of assembly, heterodimer of A and B chains; disulfide-linked. Post-translationally, it is noteworthy that in this dimer, in contrast to Con-Ins G1, the chain B is amidated and not the chain A. As to expression, expressed by the venom gland.

Its subcellular location is the secreted. In terms of biological role, this venom insulin, from a fish-hunting cone snail, facilitates prey capture by rapidly inducing hypoglycemic shock. It is one of the smallest known insulin found in nature and lacks the C-terminal segment of the B chain that, in human insulin, mediates engagement of the insulin receptor (INSR) and assembly of the hormone's hexameric storage form. Despite lacking this segment, it both binds and activates human insulin receptor (long isoform (HIR-B)) with a high potency (EC(50)=242 nM). In vivo, intraperitoneal injection of this peptide into zebrafish lowers blood glucose with a lower potency than human insulin. In addition, when applied to water, this peptide reduces overall locomotor activity of zebrafish larvae, observed as a significant decrease in the percentage of time spent swimming and movement frequency. When tested on a mouse model of diabetes, this insulin also lowers blood glucose with a 10-fold lower potency than human insulin. This chain is Con-Ins G3, found in Conus geographus (Geography cone).